The chain runs to 105 residues: Early nodulin-93 (105 aa).

The chain crosses the membrane as a helical span at residues 66–83; it reads TAQALIISTATAAAYFIV.

It is found in the membrane. This Glycine max (Soybean) protein is Early nodulin-93.